The primary structure comprises 350 residues: Guanine nucleotide-binding protein G(t) subunit alpha-1 (350 aa).

A disordered region spans residues 1–21 (MGAGASAEEKHSRELEKKLKE). Glycine 2 carries the N-myristoyl glycine lipid modification. The segment covering 7 to 21 (AEEKHSRELEKKLKE) has biased composition (basic and acidic residues). A G-alpha domain is found at 28–350 (RTVKLLLLGA…KENLKDCGLF (323 aa)). The G1 motif stretch occupies residues 31–44 (KLLLLGAGESGKST). 36 to 43 (GAGESGKS) contacts GTP. Serine 43 serves as a coordination point for Mg(2+). Tyrosine 142 carries the post-translational modification Phosphotyrosine; by SRC. Residues aspartate 146, 171–177 (LRSRVKT), glycine 199, 265–268 (NKKD), and alanine 322 contribute to the GTP site. Residues 169-177 (DVLRSRVKT) are G2 motif. ADP-ribosylarginine; by cholera toxin is present on arginine 174. Residue threonine 177 coordinates Mg(2+). Residues 192–201 (FRMFDVGGQR) are G3 motif. Residues 261–268 (VLFLNKKD) are G4 motif. The interval 320–325 (TCATDT) is G5 motif. The interaction with RHO stretch occupies residues 340–350 (IKENLKDCGLF). Cysteine 347 carries the post-translational modification ADP-ribosylcysteine; by pertussis toxin.

The protein belongs to the G-alpha family. G(i/o/t/z) subfamily. In terms of assembly, heterotrimeric G proteins are composed of 3 subunits alpha, beta and gamma. The alpha chain contains the guanine nucleotide binding site. Interacts with RHO. Interacts with RGS9 and PDE6G. Interacts (when myristoylated) with UNC119; interaction is required for localization in sensory neurons. In terms of tissue distribution, rod photoreceptor cells. Predominantly expressed in the retina followed by the ciliary body, iris and retinal pigment epithelium.

It is found in the cell projection. The protein localises to the cilium. Its subcellular location is the photoreceptor outer segment. The protein resides in the membrane. It localises to the photoreceptor inner segment. Its function is as follows. Functions as a signal transducer for the rod photoreceptor RHO. Required for normal RHO-mediated light perception by the retina. Guanine nucleotide-binding proteins (G proteins) function as transducers downstream of G protein-coupled receptors (GPCRs), such as the photoreceptor RHO. The alpha chain contains the guanine nucleotide binding site and alternates between an active, GTP-bound state and an inactive, GDP-bound state. Activated RHO promotes GDP release and GTP binding. Signaling is mediated via downstream effector proteins, such as cGMP-phosphodiesterase. In Homo sapiens (Human), this protein is Guanine nucleotide-binding protein G(t) subunit alpha-1 (GNAT1).